A 286-amino-acid polypeptide reads, in one-letter code: MKKFCLIFLLLALTALHVKGSPIPDEESEETEDAEQEEDAEEEEHAEEEAQEDGDQTQDTDQESDDGQEETANQGSDEQQEEDGSHGTDETDDEAAGSRTEDVESGGDEQNDGEENGSQENGEEVTGGEDDSHGAQDSEGGEEDAAAQEAGGKKSKGKGAKGGQGSNRAGSSSGGEESAAHTYQEVMRILNGIKINAKEPLKSRLVNGLQYLKVDTINRVENIQKFSRIEHCFGNLDHIVQLYAGDAVERNDYCKGTCIDMVSNEFRGQMEELTSRLYPCLQGGYY.

The first 20 residues, 1–20 (MKKFCLIFLLLALTALHVKG), serve as a signal peptide directing secretion. Residues 17–179 (HVKGSPIPDE…GSSSGGEESA (163 aa)) form a disordered region. Acidic residues-rich tracts occupy residues 24–69 (PDEE…DGQE) and 103–129 (VESGGDEQNDGEENGSQENGEEVTGGE). A glycan (N-linked (GlcNAc...) asparagine) is linked at Asn116. Low complexity predominate over residues 166 to 177 (SNRAGSSSGGEE).

This sequence belongs to the aegyptin family. In terms of assembly, monomeric in solution; likely has an elongated non-globular form. Interacts with human and rat collagens (via a RGQOGVMGF peptide, where O is hydroxyproline). Not glycosylated. In terms of tissue distribution, salivary gland.

Its subcellular location is the secreted. Its function is as follows. Inhibits host platelet aggregation induced by low concentrations of collagen via blocking the von Willebrand Factor (VWF) interaction with collagen. This Simulium nigrimanum (Black fly) protein is Simplagrin.